The following is a 218-amino-acid chain: Glutathione S-transferase U22 (218 aa).

At A2 the chain carries N-acetylalanine. Positions 3–82 (DEVILLDFWP…YIDEVWSDKN (80 aa)) constitute a GST N-terminal domain. Residues 13-14 (SP), 39-40 (DK), 53-54 (KI), and 66-67 (ES) each bind glutathione. In terms of domain architecture, GST C-terminal spans 88 to 208 (DPYQRAQARF…LHDSEKILAF (121 aa)). Position 149 is a phosphothreonine (T149).

The protein belongs to the GST superfamily. Tau family.

Its subcellular location is the cytoplasm. The protein resides in the cytosol. The enzyme catalyses RX + glutathione = an S-substituted glutathione + a halide anion + H(+). Its function is as follows. May be involved in the conjugation of reduced glutathione to a wide number of exogenous and endogenous hydrophobic electrophiles and have a detoxification role against certain herbicides. The polypeptide is Glutathione S-transferase U22 (GSTU22) (Arabidopsis thaliana (Mouse-ear cress)).